We begin with the raw amino-acid sequence, 544 residues long: Probable protein kinase UbiB (544 aa).

The Protein kinase domain occupies 123 to 505 (EFDEQALASA…GRQKSHNVRS (383 aa)). Residues 129 to 137 (LASASIAQV) and Lys-156 each bind ATP. Asp-291 acts as the Proton acceptor in catalysis. A helical transmembrane segment spans residues 522–540 (LPLWLSCGTLVTVLLVLLL).

Belongs to the ABC1 family. UbiB subfamily.

It is found in the cell inner membrane. The protein operates within cofactor biosynthesis; ubiquinone biosynthesis [regulation]. In terms of biological role, is probably a protein kinase regulator of UbiI activity which is involved in aerobic coenzyme Q (ubiquinone) biosynthesis. This chain is Probable protein kinase UbiB, found in Actinobacillus pleuropneumoniae serotype 7 (strain AP76).